The chain runs to 106 residues: Large ribosomal subunit protein uL24 (106 aa).

The protein belongs to the universal ribosomal protein uL24 family. In terms of assembly, part of the 50S ribosomal subunit.

Functionally, one of two assembly initiator proteins, it binds directly to the 5'-end of the 23S rRNA, where it nucleates assembly of the 50S subunit. In terms of biological role, one of the proteins that surrounds the polypeptide exit tunnel on the outside of the subunit. In Acinetobacter baylyi (strain ATCC 33305 / BD413 / ADP1), this protein is Large ribosomal subunit protein uL24.